Here is a 608-residue protein sequence, read N- to C-terminus: UvrABC system protein C (608 aa).

Residues 13 to 91 (HDPGVYRMFD…IKTFQPRYNV (79 aa)) form the GIY-YIG domain. The UVR domain maps to 201–236 (QQVLDHLIGKMERASRALNFEEAARYRDQIQAVRSV).

Belongs to the UvrC family. Interacts with UvrB in an incision complex.

It is found in the cytoplasm. The UvrABC repair system catalyzes the recognition and processing of DNA lesions. UvrC both incises the 5' and 3' sides of the lesion. The N-terminal half is responsible for the 3' incision and the C-terminal half is responsible for the 5' incision. This chain is UvrABC system protein C, found in Mannheimia succiniciproducens (strain KCTC 0769BP / MBEL55E).